The sequence spans 191 residues: MRGKTQEDRDLIEMLDPVAESLGYEIVRLRLMGGTEQRRLQIMAEHPLLEDGSGGDMNVEDCAKLSRAVSEVLDAADPIAGEYTLEVSSPGIDRPLTRLKDFDDYAGLEARIELDRVAEGRKRFKGELAGVEDDQVGLNIEGEDDVTVYFPFAWVIDAKLVMTDALMERGAKQRAARLESDNEDLSESEED.

Belongs to the RimP family.

The protein localises to the cytoplasm. In terms of biological role, required for maturation of 30S ribosomal subunits. This is Ribosome maturation factor RimP from Caulobacter vibrioides (strain NA1000 / CB15N) (Caulobacter crescentus).